The primary structure comprises 421 residues: Fumarylacetoacetase (421 aa).

Residue Asp131 participates in Ca(2+) binding. His138 acts as the Proton acceptor in catalysis. Arg147 provides a ligand contact to substrate. Glu204, Glu206, and Asp238 together coordinate Ca(2+). Mg(2+) is bound at residue Asp238. Substrate-binding residues include Gln245 and Tyr249. Lys258 and Thr262 together coordinate Mg(2+). Thr355 is a binding site for substrate.

This sequence belongs to the FAH family. It depends on Ca(2+) as a cofactor. Requires Mg(2+) as cofactor.

The enzyme catalyses 4-fumarylacetoacetate + H2O = acetoacetate + fumarate + H(+). It functions in the pathway amino-acid degradation; L-phenylalanine degradation; acetoacetate and fumarate from L-phenylalanine: step 6/6. Converts fumarylacetoacetate to acetoacetate and fumarate. Involved in tyrosine catabolic pathway. Catalyzes the final step in the tyrosine degradation pathway. The chain is Fumarylacetoacetase from Arabidopsis thaliana (Mouse-ear cress).